A 206-amino-acid chain; its full sequence is Small ribosomal subunit protein uS4 (206 aa).

Residues 96 to 156 enclose the S4 RNA-binding domain; the sequence is CRLDNVVYRM…EKAKNQLRIV (61 aa).

This sequence belongs to the universal ribosomal protein uS4 family. In terms of assembly, part of the 30S ribosomal subunit. Contacts protein S5. The interaction surface between S4 and S5 is involved in control of translational fidelity.

Its function is as follows. One of the primary rRNA binding proteins, it binds directly to 16S rRNA where it nucleates assembly of the body of the 30S subunit. In terms of biological role, with S5 and S12 plays an important role in translational accuracy. The polypeptide is Small ribosomal subunit protein uS4 (Pseudomonas fluorescens (strain SBW25)).